The primary structure comprises 545 residues: CTP synthase (545 aa).

The tract at residues 1-266 is amidoligase domain; it reads MITNYIFVTG…DQYICDKFNL (266 aa). S14 is a binding site for CTP. S14 contacts UTP. ATP is bound by residues 15 to 20 and D72; that span reads SLGKGI. Mg(2+) contacts are provided by D72 and E140. Residues 147 to 149, 187 to 192, and K223 each bind CTP; these read DIE and KTKPTQ. UTP contacts are provided by residues 187-192 and K223; that span reads KTKPTQ. 239 to 241 lines the ATP pocket; the sequence is KDV. The Glutamine amidotransferase type-1 domain occupies 291–542; sequence SIGMVGKYIE…VKSALAHHQD (252 aa). Residue G352 coordinates L-glutamine. C379 (nucleophile; for glutamine hydrolysis) is an active-site residue. L-glutamine is bound by residues 380-383, E403, and R470; that span reads LGMQ. Active-site residues include H515 and E517.

The protein belongs to the CTP synthase family. Homotetramer.

It carries out the reaction UTP + L-glutamine + ATP + H2O = CTP + L-glutamate + ADP + phosphate + 2 H(+). The enzyme catalyses L-glutamine + H2O = L-glutamate + NH4(+). The catalysed reaction is UTP + NH4(+) + ATP = CTP + ADP + phosphate + 2 H(+). The protein operates within pyrimidine metabolism; CTP biosynthesis via de novo pathway; CTP from UDP: step 2/2. With respect to regulation, allosterically activated by GTP, when glutamine is the substrate; GTP has no effect on the reaction when ammonia is the substrate. The allosteric effector GTP functions by stabilizing the protein conformation that binds the tetrahedral intermediate(s) formed during glutamine hydrolysis. Inhibited by the product CTP, via allosteric rather than competitive inhibition. Catalyzes the ATP-dependent amination of UTP to CTP with either L-glutamine or ammonia as the source of nitrogen. Regulates intracellular CTP levels through interactions with the four ribonucleotide triphosphates. In Hamiltonella defensa subsp. Acyrthosiphon pisum (strain 5AT), this protein is CTP synthase.